The primary structure comprises 352 residues: N-acetyl-gamma-glutamyl-phosphate reductase (352 aa).

Residue Cys-155 is part of the active site.

It belongs to the NAGSA dehydrogenase family. Type 1 subfamily.

The protein localises to the cytoplasm. The enzyme catalyses N-acetyl-L-glutamate 5-semialdehyde + phosphate + NADP(+) = N-acetyl-L-glutamyl 5-phosphate + NADPH + H(+). Its pathway is amino-acid biosynthesis; L-arginine biosynthesis; N(2)-acetyl-L-ornithine from L-glutamate: step 3/4. Functionally, catalyzes the NADPH-dependent reduction of N-acetyl-5-glutamyl phosphate to yield N-acetyl-L-glutamate 5-semialdehyde. This is N-acetyl-gamma-glutamyl-phosphate reductase from Acaryochloris marina (strain MBIC 11017).